The following is a 165-amino-acid chain: Short form salivary protein D7R1 (165 aa).

An N-terminal signal peptide occupies residues 1–21; sequence MFNKLHLVSLLACGLFVIAQA. Disulfide bonds link cysteine 27–cysteine 59, cysteine 40–cysteine 164, and cysteine 98–cysteine 117. 5 residues coordinate serotonin: glutamate 28, histidine 56, tyrosine 115, aspartate 132, and glutamate 135. Histamine-binding residues include tyrosine 115, aspartate 132, and glutamate 135.

The protein belongs to the PBP/GOBP family. In terms of tissue distribution, female salivary gland. Not detected in female carcass without salivary glands. Not detected in male tissues.

It localises to the secreted. Functionally, modulates blood feeding of female mosquitoes on vertebrate species by binding and sequestering different mediators involved in the host response. Binds serotonin and histamine. Increases blood clotting time. The chain is Short form salivary protein D7R1 from Anopheles gambiae (African malaria mosquito).